Consider the following 133-residue polypeptide: U-scoloptoxin(11)-Sm1a (133 aa).

Residues 1–19 (MIWFLAFILFLAAGELVSS) form the signal peptide.

This sequence belongs to the scoloptoxin-11 family. Post-translationally, contains 10 disulfide bonds. As to expression, expressed by the venom gland.

The protein resides in the secreted. The chain is U-scoloptoxin(11)-Sm1a from Scolopendra morsitans (Tanzanian blue ringleg centipede).